Reading from the N-terminus, the 62-residue chain is Large ribosomal subunit protein bL28 (62 aa).

Residues 1–24 (MGKQCFVTGRKASTGNNRSHALNS) are disordered. A compositionally biased stretch (polar residues) spans 11–24 (KASTGNNRSHALNS).

Belongs to the bacterial ribosomal protein bL28 family.

This is Large ribosomal subunit protein bL28 from Staphylococcus saprophyticus subsp. saprophyticus (strain ATCC 15305 / DSM 20229 / NCIMB 8711 / NCTC 7292 / S-41).